Here is a 1494-residue protein sequence, read N- to C-terminus: ABC multidrug transporter atrG (1494 aa).

The span at 1–11 shows a compositional bias: polar residues; sequence MSLLGTINPNL. 2 disordered regions span residues 1–48 and 84–105; these read MSLL…RTSD and FSVSQNAENPFLETKEDSTLNP. N41 carries an N-linked (GlcNAc...) asparagine glycan. N141 and N340 each carry an N-linked (GlcNAc...) asparagine glycan. Residues 162-416 enclose the ABC transporter 1 domain; that stretch reads LQVGALFRAV…FTTMGFECPE (255 aa). The next 2 membrane-spanning stretches (helical) occupy residues 527–547 and 561–581; these read LTMSQLIGNFIMALIIGSVFY and ALLFFAVLLNAFSSALEILTL. N622 carries an N-linked (GlcNAc...) asparagine glycan. Transmembrane regions (helical) follow at residues 636 to 656, 669 to 689, and 778 to 798; these read GPFFVFLLFTFVTTMTMSMLF, ALVPAAILILGLVIYTGFTIP, and GIMFAFMVFFLATYLTATEYI. An N-linked (GlcNAc...) asparagine glycan is attached at N835. The 244-residue stretch at 852-1095 folds into the ABC transporter 2 domain; that stretch reads FHWQDVCYDI…LASYFERNGA (244 aa). 888-895 provides a ligand contact to ATP; sequence GVSGAGKT. Helical transmembrane passes span 1191–1211, 1227–1247, 1276–1296, 1312–1332, and 1351–1371; these read YIYSKAVLCILTSLYIGFSFF, IFMLMTIFGNLVQQIMPNFVT, LPWNALMSVIIFVCWYYPIGL, LMWLLILSFLLFTSTFAHMMI, and LCLIFCGVLATPETLPGFWIF. N-linked (GlcNAc...) asparagine glycosylation is found at N1410 and N1432. Residues 1463 to 1483 traverse the membrane as a helical segment; the sequence is FGIMWAFIVFNIAAAVFIYWL.

This sequence belongs to the ABC transporter superfamily. ABCG family. PDR (TC 3.A.1.205) subfamily.

Its subcellular location is the cell membrane. The catalysed reaction is (R)-miconazole(in) + ATP + H2O = (R)-miconazole(out) + ADP + phosphate + H(+). Pleiotropic ABC efflux transporter involved in the basal level of azole susceptibility. Confers resistance to miconazole and clotrimazole. The sequence is that of ABC multidrug transporter atrG from Aspergillus oryzae (strain ATCC 42149 / RIB 40) (Yellow koji mold).